Consider the following 238-residue polypeptide: Ribonuclease HII (238 aa).

One can recognise an RNase H type-2 domain in the interval 23–215 (QRLCGVDEAG…VREALARLPM (193 aa)). 3 residues coordinate a divalent metal cation: D29, E30, and D124.

The protein belongs to the RNase HII family. Mn(2+) serves as cofactor. Requires Mg(2+) as cofactor.

It localises to the cytoplasm. It carries out the reaction Endonucleolytic cleavage to 5'-phosphomonoester.. Functionally, endonuclease that specifically degrades the RNA of RNA-DNA hybrids. The polypeptide is Ribonuclease HII (Cupriavidus necator (strain ATCC 17699 / DSM 428 / KCTC 22496 / NCIMB 10442 / H16 / Stanier 337) (Ralstonia eutropha)).